We begin with the raw amino-acid sequence, 254 residues long: PF03932 family protein CutC (254 aa).

This sequence belongs to the CutC family.

Its subcellular location is the cytoplasm. This is PF03932 family protein CutC from Yersinia pestis bv. Antiqua (strain Antiqua).